The chain runs to 1024 residues: Gamma-tubulin complex component 5 (1024 aa).

3 disordered regions span residues 153–203 (IGLG…GGPQ), 523–545 (NEDK…SSRQ), and 853–873 (SQAK…GPPK). A compositionally biased stretch (basic and acidic residues) spans 189–198 (TPLEEQDHNR). Positions 529–543 (DSASASSGSDQGPSS) are enriched in low complexity. Residues 853-864 (SQAKEDIPRDQD) show a composition bias toward basic and acidic residues.

Belongs to the TUBGCP family. In terms of assembly, component of the gamma-tubulin ring complex (gTuRC) consisting of TUBGCP2, TUBGCP3, TUBGCP4, TUBGCP5 and TUBGCP6 and gamma-tubulin TUBG1 or TUBG2. TUBGCP2, TUBGCP3, TUBGCP4, TUBGCP5 and TUBGCP6 assemble in a 5:5:2:1:1 stoichiometry; each is associated with a gamma-tubulin, thereby arranging 14 gamma-tubulins in a helical manner. Gamma-tubulin at the first position is blocked by TUBGCP3 at the last position, allowing 13 protafilaments to grow into a microtubule. The gTuRC (via TUBGCP3 and TUBGCP6) interacts with ACTB and MZT1; the interactions form a luminal bridge that stabilizes the initial structure during complex assembly. The gTuRC (via TUBGCP2) interacts with MZT2A/MZT2B and CDK5RAP2 (via CM1 motif); the interactions play a role in gTuRC activation.

The protein resides in the cytoplasm. It localises to the cytoskeleton. The protein localises to the microtubule organizing center. Its subcellular location is the centrosome. In terms of biological role, component of the gamma-tubulin ring complex (gTuRC) which mediates microtubule nucleation. The gTuRC regulates the minus-end nucleation of alpha-beta tubulin heterodimers that grow into microtubule protafilaments, a critical step in centrosome duplication and spindle formation. The chain is Gamma-tubulin complex component 5 (Tubgcp5) from Mus musculus (Mouse).